Reading from the N-terminus, the 204-residue chain is Thymidylate kinase (204 aa).

Residue 11 to 18 (GIDGAGKS) coordinates ATP.

The protein belongs to the thymidylate kinase family.

It catalyses the reaction dTMP + ATP = dTDP + ADP. Its function is as follows. Phosphorylation of dTMP to form dTDP in both de novo and salvage pathways of dTTP synthesis. The protein is Thymidylate kinase of Janthinobacterium sp. (strain Marseille) (Minibacterium massiliensis).